The chain runs to 58 residues: UPF0391 membrane protein Sbal195_1447 (58 aa).

2 helical membrane passes run 6–26 and 28–48; these read LVFL…IAGA and AGIA…SLLV.

It belongs to the UPF0391 family.

It is found in the cell membrane. The chain is UPF0391 membrane protein Sbal195_1447 from Shewanella baltica (strain OS195).